The following is a 389-amino-acid chain: Monomeric sarcosine oxidase (389 aa).

Position 8-38 (Asp-8–Phe-38) interacts with FAD. Cys-318 is subject to S-8alpha-FAD cysteine.

The protein belongs to the MSOX/MTOX family. MSOX subfamily. In terms of assembly, monomer. The cofactor is FAD.

The protein localises to the cytoplasm. It catalyses the reaction sarcosine + O2 + H2O = formaldehyde + glycine + H2O2. In terms of biological role, catalyzes the oxidative demethylation of sarcosine. In Arthrobacter sp. (strain TE1826), this protein is Monomeric sarcosine oxidase (soxA).